We begin with the raw amino-acid sequence, 421 residues long: Bestrophin homolog 2 (421 aa).

The next 4 membrane-spanning stretches (helical) occupy residues 28–48 (IWKA…IISV), 73–93 (LSFI…VDRW), 239–259 (LMYP…SIIA), and 275–295 (VYFP…LKVI).

The protein belongs to the anion channel-forming bestrophin (TC 1.A.46) family. Calcium-sensitive chloride channel subfamily. In terms of assembly, forms oligomers.

It is found in the cell membrane. Functionally, forms chloride channels. In Caenorhabditis elegans, this protein is Bestrophin homolog 2 (best-2).